The following is a 412-amino-acid chain: Gamma-glutamyl phosphate reductase (412 aa).

This sequence belongs to the gamma-glutamyl phosphate reductase family.

It localises to the cytoplasm. It catalyses the reaction L-glutamate 5-semialdehyde + phosphate + NADP(+) = L-glutamyl 5-phosphate + NADPH + H(+). It functions in the pathway amino-acid biosynthesis; L-proline biosynthesis; L-glutamate 5-semialdehyde from L-glutamate: step 2/2. Its function is as follows. Catalyzes the NADPH-dependent reduction of L-glutamate 5-phosphate into L-glutamate 5-semialdehyde and phosphate. The product spontaneously undergoes cyclization to form 1-pyrroline-5-carboxylate. The protein is Gamma-glutamyl phosphate reductase of Actinobacillus pleuropneumoniae serotype 3 (strain JL03).